We begin with the raw amino-acid sequence, 103 residues long: MSQQARVRLAGTSPEDLDDICADVREIANKTGVELSGPVPLPTKTLEVPSRKSPDGEGTATWEHWEMRVHKRLIDIDADERALRQLMRIQVPNDVSIEIVLED.

The segment at leucine 35–threonine 59 is disordered.

This sequence belongs to the universal ribosomal protein uS10 family. In terms of assembly, part of the 30S ribosomal subunit.

Its function is as follows. Involved in the binding of tRNA to the ribosomes. This chain is Small ribosomal subunit protein uS10 (rps10), found in Haloarcula marismortui (strain ATCC 43049 / DSM 3752 / JCM 8966 / VKM B-1809) (Halobacterium marismortui).